We begin with the raw amino-acid sequence, 330 residues long: NmrA-like family domain-containing oxidoreductase notO (330 aa).

Residues Val12–Leu17, His38–Gln42, Arg59–Ser60, Ile80–Ala82, and Leu160–Gly163 contribute to the NADP(+) site. A helical membrane pass occupies residues Val12–Ile32. The interval Ser158–Ala202 is interaction with ASS1. 2 N-linked (GlcNAc...) asparagine glycosylation sites follow: Asn180 and Asn207.

Belongs to the NmrA-type oxidoreductase family.

Its subcellular location is the membrane. NmrA-like family domain-containing oxidoreductase; part of the gene cluster that mediates the biosynthesis of notoamide, a fungal indole alkaloid that belongs to a family of natural products containing a characteristic bicyclo[2.2.2]diazaoctane core. The first step of notoamide biosynthesis involves coupling of L-proline and L-tryptophan by the bimodular NRPS notE, to produce cyclo-L-tryptophan-L-proline called brevianamide F. The reverse prenyltransferase notF then acts as a deoxybrevianamide E synthase and converts brevianamide F to deoxybrevianamide E via reverse prenylation at C-2 of the indole ring leading to the bicyclo[2.2.2]diazaoctane core. Deoxybrevianamide E is further hydroxylated at C-6 of the indole ring, likely catalyzed by the cytochrome P450 monooxygenase notG, to yield 6-hydroxy-deoxybrevianamide E. 6-hydroxy-deoxybrevianamide E is a specific substrate of the prenyltransferase notC for normal prenylation at C-7 to produce 6-hydroxy-7-prenyl-deoxybrevianamide, also called notoamide S. As the proposed pivotal branching point in notoamide biosynthesis, notoamide S can be diverted to notoamide E through an oxidative pyran ring closure putatively catalyzed by either notH cytochrome P450 monooxygenase or the notD FAD-linked oxidoreductase. This step would be followed by an indole 2,3-epoxidation-initiated pinacol-like rearrangement catalyzed by the notB FAD-dependent monooxygenase leading to the formation of notoamide C and notoamide D. On the other hand notoamide S is converted to notoamide T by notH (or notD), a bifunctional oxidase that also functions as the intramolecular Diels-Alderase responsible for generation of (+)-notoamide T. To generate antipodal (-)-notoaminide T, notH' (or notD') in Aspergillus versicolor is expected to catalyze a Diels-Alder reaction leading to the opposite stereochemistry. The remaining oxidoreductase notD (or notH) likely catalyzes the oxidative pyran ring formation to yield (+)-stephacidin A. The FAD-dependent monooxygenase notI is highly similar to notB and is predicted to catalyze a similar conversion from (+)-stephacidin A to (-)-notoamide B via the 2,3-epoxidation of (+)-stephacidin A followed by a pinacol-type rearrangement. Finally, it remains unclear which enzyme could be responsible for the final hydroxylation steps leading to notoamide A and sclerotiamide. The function of notO in the notoamide biosynthesis has not been determined yet. This chain is NmrA-like family domain-containing oxidoreductase notO, found in Aspergillus sp. (strain MF297-2).